The sequence spans 85 residues: Serine protease inhibitor Kazal-type 7 (85 aa).

The signal sequence occupies residues 1–19 (MKITGGLLLLCTVVYFCSS). Residues 26-85 (SPKKVDCSIYKKYPVVAIPCPITYLPVCGSDYITYGNECHLCTESLKSNGRVQFLHDGSC) form the Kazal-like domain. Cystine bridges form between C32-C67, C45-C64, and C53-C85.

It localises to the secreted. Functionally, probable serine protease inhibitor. In Homo sapiens (Human), this protein is Serine protease inhibitor Kazal-type 7 (SPINK7).